Reading from the N-terminus, the 583-residue chain is Peptidyl-prolyl cis-trans isomerase FKBP10 (583 aa).

The N-terminal stretch at 1-27 (MLRAGPPSHTLLRLPLLQLLLLLLVQA) is a signal peptide. 4 PPIase FKBP-type domains span residues 63-151 (GDFV…LDVW), 175-263 (SDFV…IDVH), 287-375 (GDFM…IDFH), and 400-487 (GDFV…VSRE). Asn-71, Asn-183, and Asn-295 each carry an N-linked (GlcNAc...) asparagine glycan. EF-hand domains lie at 498-533 (WHED…QVSE) and 543-578 (DPEK…DQDR). Ca(2+) is bound by residues Asp-511, Asn-513, Asp-515, Glu-517, Glu-522, Asp-556, Asn-558, Asp-560, Lys-562, and Glu-567. The interval 534 to 583 (GKGRLLPGQDPEKTIGDMFQNQDRNQDGKITAEELKLKSDEDQDRVHEEL) is disordered. Over residues 557 to 583 (RNQDGKITAEELKLKSDEDQDRVHEEL) the composition is skewed to basic and acidic residues. A Prevents secretion from ER motif is present at residues 580 to 583 (HEEL).

Glycosylated and phosphorylated.

The protein localises to the endoplasmic reticulum lumen. It carries out the reaction [protein]-peptidylproline (omega=180) = [protein]-peptidylproline (omega=0). Its activity is regulated as follows. Inhibited by both FK506 and rapamycin, but not by cyclosporin A. PPIases accelerate the folding of proteins during protein synthesis. In Bos taurus (Bovine), this protein is Peptidyl-prolyl cis-trans isomerase FKBP10 (FKBP10).